Consider the following 326-residue polypeptide: Malate dehydrogenase (326 aa).

Position 12 to 18 (12 to 18 (GGTGQIA)) interacts with NAD(+). Substrate contacts are provided by arginine 93 and arginine 99. Residues asparagine 106, glutamine 113, and 130–132 (VGN) each bind NAD(+). Residues asparagine 132 and arginine 163 each contribute to the substrate site. Residue histidine 188 is the Proton acceptor of the active site.

The protein belongs to the LDH/MDH superfamily. MDH type 2 family.

The enzyme catalyses (S)-malate + NAD(+) = oxaloacetate + NADH + H(+). In terms of biological role, catalyzes the reversible oxidation of malate to oxaloacetate. The chain is Malate dehydrogenase from Chlamydia trachomatis serovar L2 (strain ATCC VR-902B / DSM 19102 / 434/Bu).